The primary structure comprises 356 residues: sn-glycerol-3-phosphate import ATP-binding protein UgpC (356 aa).

Positions 4 to 235 constitute an ABC transporter domain; that stretch reads LKLQAVTKSW…PASLFVASFI (232 aa). Residue 37–44 coordinates ATP; the sequence is GPSGCGKS.

Belongs to the ABC transporter superfamily. sn-glycerol-3-phosphate importer (TC 3.A.1.1.3) family. As to quaternary structure, the complex is composed of two ATP-binding proteins (UgpC), two transmembrane proteins (UgpA and UgpE) and a solute-binding protein (UgpB).

It is found in the cell inner membrane. The catalysed reaction is sn-glycerol 3-phosphate(out) + ATP + H2O = sn-glycerol 3-phosphate(in) + ADP + phosphate + H(+). It catalyses the reaction glycerol 2-phosphate(out) + ATP + H2O = glycerol 2-phosphate(in) + ADP + phosphate + H(+). Its activity is regulated as follows. ATPase activity is stimulated when UgpB is bound to G3P. Transport is inhibited in vivo by increasing levels of internal phosphate. However, ATPase activity in proteoliposomes is neither inhibited by phosphate nor by the signal transducing protein PhoU or the phosphodiesterase UgpQ. Activated by gluconate and inhibited by fumarate. Functionally, part of the ABC transporter complex UgpBAEC involved in sn-glycerol-3-phosphate (G3P) import. Responsible for energy coupling to the transport system. Can also transport glycerophosphoryl diesters, which are hydrolyzed to G3P and alcohol during transport. The G3P moiety can be detected in the cytoplasm whereas the corresponding alcohol is usually found in the culture medium. It was proposed by Yang et al that the complex could also transport glycerol-2-phosphate (G2P) in vivo, but it was shown later by Wuttge et al that UgpB does not bind G2P, questioning this transport activity. G2P might be converted in the periplasm to G3P before its transport. This Escherichia coli (strain K12) protein is sn-glycerol-3-phosphate import ATP-binding protein UgpC.